Consider the following 842-residue polypeptide: DNA mismatch repair protein MutS (842 aa).

596–603 contacts ATP; sequence GPNMSGKS.

Belongs to the DNA mismatch repair MutS family.

Functionally, this protein is involved in the repair of mismatches in DNA. It is possible that it carries out the mismatch recognition step. This protein has a weak ATPase activity. The polypeptide is DNA mismatch repair protein MutS (Exiguobacterium sp. (strain ATCC BAA-1283 / AT1b)).